Here is a 229-residue protein sequence, read N- to C-terminus: 1-Cys peroxiredoxin PER1 (229 aa).

The Thioredoxin domain maps to 4-173 (LTIGDTVPNL…VLRAVDSLLT (170 aa)). C46 functions as the Cysteine sulfenic acid (-SOH) intermediate in the catalytic mechanism. Residues 205-228 (RKMFPQGFETADLPSKKGYLRFTK) carry the Bipartite nuclear localization signal motif.

It belongs to the peroxiredoxin family. Prx6 subfamily.

It localises to the nucleus. The protein resides in the cytoplasm. The enzyme catalyses a hydroperoxide + [thioredoxin]-dithiol = an alcohol + [thioredoxin]-disulfide + H2O. Thiol-specific peroxidase that catalyzes the reduction of hydrogen peroxide and organic hydroperoxides to water and alcohols, respectively. Seems to contribute to the inhibition of germination during stress. The polypeptide is 1-Cys peroxiredoxin PER1 (PER1) (Zea mays (Maize)).